The sequence spans 29 residues: MDSLTQKLTVLIAVLELLVALLRLIDLLK.

The chain crosses the membrane as a helical span at residues 10–27 (VLIAVLELLVALLRLIDL).

Its subcellular location is the membrane. Functionally, toxic component of a type I toxin-antitoxin (TA) system. Overexpression leads to cell stasis and a decrease in colony-forming units. Probably repressed by cognate small RNA orzP. Base pairing occurs between 18 bases in the 5' UTR of zorP mRNA and the 5' end of OrzP sRNA. This is Small toxic protein ZorP from Escherichia coli O157:H7.